The following is a 168-amino-acid chain: MAQEEEDVRDYNLTEEQKATKDKYPPVNRKYEYLDHTADVQLHAWGDTLEEAFEQCAMAMFGYMTDTGTVEPLRTVEVETQGDDLQSLLFHFLDEWLYKFSADEYFIPREVKVLNIDQKNFKLRSIGWGEEFSLSKHPQGTEVKAITYSAMQVYNEEKPEVFFVIIDI.

Residue alanine 2 is modified to N-acetylalanine. Residues aspartate 39, aspartate 167, and isoleucine 168 each coordinate Ca(2+).

It belongs to the archease family. In terms of assembly, component of the tRNA-splicing ligase complex.

Functionally, component of the tRNA-splicing ligase complex required to facilitate the enzymatic turnover of catalytic subunit RTCB. Together with DDX1, acts by facilitating the guanylylation of RTCB, a key intermediate step in tRNA ligation. The protein is Protein archease (Zbtb8os) of Mus musculus (Mouse).